Consider the following 570-residue polypeptide: Interleukin-1 receptor accessory protein (570 aa).

An N-terminal signal peptide occupies residues Met1 to Ala20. 3 consecutive Ig-like C2-type domains span residues Ser21–Pro128, Pro141–Thr230, and Pro243–Lys348. Residues Ser21 to Thr367 are Extracellular-facing. 5 disulfide bridges follow: Cys24/Cys122, Cys47/Cys114, Cys137/Cys181, Cys160/Cys212, and Cys266/Cys332. Residue Asn57 is glycosylated (N-linked (GlcNAc...) asparagine). The segment at Ile69–Phe85 is essential for interaction with PTPRD. 6 N-linked (GlcNAc...) asparagine glycosylation sites follow: Asn107, Asn111, Asn118, Asn157, Asn196, and Asn209. The helical transmembrane segment at Val368–Phe388 threads the bilayer. Topologically, residues Tyr389–Val570 are cytoplasmic. The 144-residue stretch at Lys403–Met546 folds into the TIR domain. Residue Glu482 is part of the active site. The disordered stretch occupies residues Lys550–Val570. The segment covering Arg553–Val570 has biased composition (polar residues). The residue at position 557 (Ser557) is a Phosphoserine.

The protein belongs to the interleukin-1 receptor family. In terms of assembly, the interleukin-36 receptor complex is a heterodimer of IL1RL2 and IL1RAP; the association is inhibited by IL36RN. The interleukin-1 receptor complex is a heterodimer of IL1R1 and IL1RAP. Associates with IL1R2 to form a non-signaling interleukin-1 receptor complex. Interacts with IL-33-bound IL1RL1 to form the minimal interleukin-33 signaling complex with a 1:1:1 stoichiometry. Interacts with KIT (independently of stimulation with KITLG/SCF). A mast cell-specific KITLG/SCF-induced interleukin-33 signaling complex contains IL1RL1, IL1RAP, KIT and MYD88. Interacts (via the first immunoglobilin domain) with PTPRD (via the third immunoglobilin domain); induces pre- and postsynaptic differentiation of neurons. As to expression, highly expressed in hypothalamus, in the dentate gyrus of hippocampus, cerebral cortex, cerebellum, liver and lung.

It localises to the membrane. It catalyses the reaction NAD(+) + H2O = ADP-D-ribose + nicotinamide + H(+). Coreceptor for IL1RL2 in the IL-36 signaling system. Coreceptor with IL1R1 in the IL-1 signaling system. Associates with IL1R1 bound to IL1B to form the high affinity interleukin-1 receptor complex which mediates interleukin-1-dependent activation of NF-kappa-B and other pathways. Signaling involves the recruitment of adapter molecules such as TOLLIP, MYD88, and IRAK1 or IRAK2 via the respective TIR domains of the receptor/coreceptor subunits. Recruits TOLLIP to the signaling complex. Does not bind to interleukin-1 alone; binding of IL1RN to IL1R1, prevents its association with IL1R1 to form a signaling complex. The cellular response is modulated through a non-signaling association with the membrane IL1R2 decoy receptor. Coreceptor for IL1RL1 in the IL-33 signaling system. Can bidirectionally induce pre- and postsynaptic differentiation of neurons by trans-synaptically binding to PTPRD. May play a role in IL1B-mediated costimulation of IFNG production from T-helper 1 (Th1) cells. The protein is Interleukin-1 receptor accessory protein (Il1rap) of Rattus norvegicus (Rat).